Reading from the N-terminus, the 118-residue chain is Protein YLR162W (118 aa).

Polar residues predominate over residues M1 to S20. The disordered stretch occupies residues M1–P26. Residues L38–A58 traverse the membrane as a helical segment.

It localises to the membrane. Functionally, overexpression confers resistance to the antimicrobial peptide MiAMP1. The sequence is that of Protein YLR162W from Saccharomyces cerevisiae (strain ATCC 204508 / S288c) (Baker's yeast).